A 157-amino-acid polypeptide reads, in one-letter code: Crossover junction endodeoxyribonuclease RuvC (157 aa).

Active-site residues include D9, E70, and D142. Mg(2+) contacts are provided by D9, E70, and D142.

This sequence belongs to the RuvC family. Homodimer which binds Holliday junction (HJ) DNA. The HJ becomes 2-fold symmetrical on binding to RuvC with unstacked arms; it has a different conformation from HJ DNA in complex with RuvA. In the full resolvosome a probable DNA-RuvA(4)-RuvB(12)-RuvC(2) complex forms which resolves the HJ. It depends on Mg(2+) as a cofactor.

Its subcellular location is the cytoplasm. The catalysed reaction is Endonucleolytic cleavage at a junction such as a reciprocal single-stranded crossover between two homologous DNA duplexes (Holliday junction).. Its function is as follows. The RuvA-RuvB-RuvC complex processes Holliday junction (HJ) DNA during genetic recombination and DNA repair. Endonuclease that resolves HJ intermediates. Cleaves cruciform DNA by making single-stranded nicks across the HJ at symmetrical positions within the homologous arms, yielding a 5'-phosphate and a 3'-hydroxyl group; requires a central core of homology in the junction. The consensus cleavage sequence is 5'-(A/T)TT(C/G)-3'. Cleavage occurs on the 3'-side of the TT dinucleotide at the point of strand exchange. HJ branch migration catalyzed by RuvA-RuvB allows RuvC to scan DNA until it finds its consensus sequence, where it cleaves and resolves the cruciform DNA. In Cyanothece sp. (strain PCC 7425 / ATCC 29141), this protein is Crossover junction endodeoxyribonuclease RuvC.